The primary structure comprises 305 residues: UDP-3-O-acyl-N-acetylglucosamine deacetylase (305 aa).

The Zn(2+) site is built by histidine 79, histidine 238, and aspartate 242. The active-site Proton donor is the histidine 265.

This sequence belongs to the LpxC family. The cofactor is Zn(2+).

It carries out the reaction a UDP-3-O-[(3R)-3-hydroxyacyl]-N-acetyl-alpha-D-glucosamine + H2O = a UDP-3-O-[(3R)-3-hydroxyacyl]-alpha-D-glucosamine + acetate. It functions in the pathway glycolipid biosynthesis; lipid IV(A) biosynthesis; lipid IV(A) from (3R)-3-hydroxytetradecanoyl-[acyl-carrier-protein] and UDP-N-acetyl-alpha-D-glucosamine: step 2/6. Its function is as follows. Catalyzes the hydrolysis of UDP-3-O-myristoyl-N-acetylglucosamine to form UDP-3-O-myristoylglucosamine and acetate, the committed step in lipid A biosynthesis. The protein is UDP-3-O-acyl-N-acetylglucosamine deacetylase of Pasteurella multocida (strain Pm70).